Consider the following 522-residue polypeptide: Glucose-1-phosphate adenylyltransferase large subunit 1, chloroplastic (522 aa).

A chloroplast-targeting transit peptide spans M1 to R54. Phosphoserine is present on S428.

It belongs to the bacterial/plant glucose-1-phosphate adenylyltransferase family. Heterotetramer. As to expression, leaves.

The protein resides in the plastid. Its subcellular location is the chloroplast. The enzyme catalyses alpha-D-glucose 1-phosphate + ATP + H(+) = ADP-alpha-D-glucose + diphosphate. The protein operates within glycan biosynthesis; starch biosynthesis. Activated by 3'phosphoglycerate, inhibited by orthophosphate. Allosteric regulation. Functionally, this protein plays a role in synthesis of starch. It catalyzes the synthesis of the activated glycosyl donor, ADP-glucose from Glc-1-P and ATP. This is Glucose-1-phosphate adenylyltransferase large subunit 1, chloroplastic (ADG2) from Arabidopsis thaliana (Mouse-ear cress).